The following is a 536-amino-acid chain: MDSSEIEVVPLDSNSHQSPTESPTITDVFSASAYGDLHQLKHFVEHNGSSVSLPDDNGFYALQWAALNNSLHVAQYIIQHGGDVNSADNIQQTPLHWAAVKGSIDVADLLLQHGARIEAVDVNGFRAVHVASQYGQTAFVNHIIVDYAADYNALDIEGRSPLHWAAYNGFTETVRLLLFRDACQNRQDNTGCTPLHWAVIKENVEACTLLVHAGTKEELILKDNTGSTPLKLASDKGHRQLALFLSKAMRTRKNSFVDKIFCGKLGETSYAPMLFSLIVILMVLFITSIVSASNLPKITAMVGLWACFGLSCGVYALITFYRVSRKDPGYVKRTGEANSQHTANDPLIDINFKNPSWKGNWSQLCPTCKIIRPVRSKHCPTCKRCVEQFDHHCPWISNCVGKKNKRYFLVFVIMGALTSFVGGTTAVQRLWRGIPQVHHGESWIKHIVIEHPDAAVFLFFDLLIFIATMTLTISQSYMIARNITTNELWNAKRFSYLRGPDGRFYNPYNHGLRRNCTDFLVHGYTRDDEVVPSSIL.

The segment at 1–23 (MDSSEIEVVPLDSNSHQSPTESP) is disordered. Positions 12–23 (DSNSHQSPTESP) are enriched in polar residues. ANK repeat units follow at residues 57–86 (NGFY…DVNS), 90–119 (IQQT…RIEA), 123–153 (NGFR…DYNA), 157–186 (EGRS…CQNR), 190–219 (TGCT…KEEL), and 225–254 (TGST…TRKN). The next 2 membrane-spanning stretches (helical) occupy residues 270–290 (YAPM…TSIV) and 298–318 (ITAM…YALI). The 51-residue stretch at 363 to 413 (QLCPTCKIIRPVRSKHCPTCKRCVEQFDHHCPWISNCVGKKNKRYFLVFVI) folds into the DHHC domain. Residue Cys393 is the S-palmitoyl cysteine intermediate of the active site. 2 helical membrane-spanning segments follow: residues 407 to 427 (YFLV…TTAV) and 454 to 474 (AAVF…LTIS).

It belongs to the DHHC palmitoyltransferase family. As to expression, expressed in roots, shoots, flowers and pollen.

It is found in the golgi apparatus membrane. It carries out the reaction L-cysteinyl-[protein] + hexadecanoyl-CoA = S-hexadecanoyl-L-cysteinyl-[protein] + CoA. Palmitoyl acyltransferase. This Arabidopsis thaliana (Mouse-ear cress) protein is Probable protein S-acyltransferase 23 (PAT23).